Consider the following 226-residue polypeptide: Triosephosphate isomerase (226 aa).

Residue histidine 91 is the Electrophile of the active site. The active-site Proton acceptor is glutamate 163. Residues glycine 169 and serine 207 each contribute to the substrate site.

Belongs to the triosephosphate isomerase family. As to quaternary structure, homodimer.

The protein resides in the cytoplasm. It catalyses the reaction D-glyceraldehyde 3-phosphate = dihydroxyacetone phosphate. Its pathway is carbohydrate biosynthesis; gluconeogenesis. It functions in the pathway carbohydrate degradation; glycolysis; D-glyceraldehyde 3-phosphate from glycerone phosphate: step 1/1. Its function is as follows. Involved in the gluconeogenesis. Catalyzes stereospecifically the conversion of dihydroxyacetone phosphate (DHAP) to D-glyceraldehyde-3-phosphate (G3P). This Rhizobium etli (strain ATCC 51251 / DSM 11541 / JCM 21823 / NBRC 15573 / CFN 42) protein is Triosephosphate isomerase.